We begin with the raw amino-acid sequence, 144 residues long: ATP synthase epsilon chain (144 aa).

Belongs to the ATPase epsilon chain family. As to quaternary structure, F-type ATPases have 2 components, CF(1) - the catalytic core - and CF(0) - the membrane proton channel. CF(1) has five subunits: alpha(3), beta(3), gamma(1), delta(1), epsilon(1). CF(0) has three main subunits: a, b and c.

Its subcellular location is the cell inner membrane. Its function is as follows. Produces ATP from ADP in the presence of a proton gradient across the membrane. The sequence is that of ATP synthase epsilon chain from Ectopseudomonas mendocina (strain ymp) (Pseudomonas mendocina).